A 605-amino-acid chain; its full sequence is uncharacterized protein (605 aa).

Disordered stretches follow at residues 10–78 (RRGG…FPPA) and 216–248 (RAPD…VRNP). Positions 20-48 (AGGRPAAGGRPAAGGRPAAGSRAAAGAAG) are enriched in low complexity. Pro residues predominate over residues 220–233 (CPSPRTPMVKPPFR).

This is an uncharacterized protein from Dryophytes versicolor (chameleon treefrog).